The sequence spans 216 residues: Octanoyltransferase (216 aa).

Positions 31–205 (STTRDEVWLV…ELVTLLDYEQ (175 aa)) constitute a BPL/LPL catalytic domain. Substrate-binding positions include 70-77 (RGGQVTYH), 137-139 (SLG), and 150-152 (GLA). Cys-168 acts as the Acyl-thioester intermediate in catalysis.

It belongs to the LipB family.

It localises to the cytoplasm. It catalyses the reaction octanoyl-[ACP] + L-lysyl-[protein] = N(6)-octanoyl-L-lysyl-[protein] + holo-[ACP] + H(+). The protein operates within protein modification; protein lipoylation via endogenous pathway; protein N(6)-(lipoyl)lysine from octanoyl-[acyl-carrier-protein]: step 1/2. Its function is as follows. Catalyzes the transfer of endogenously produced octanoic acid from octanoyl-acyl-carrier-protein onto the lipoyl domains of lipoate-dependent enzymes. Lipoyl-ACP can also act as a substrate although octanoyl-ACP is likely to be the physiological substrate. The protein is Octanoyltransferase of Vibrio cholerae serotype O1 (strain ATCC 39541 / Classical Ogawa 395 / O395).